The primary structure comprises 663 residues: 4-hydroxy-3-methylbut-2-en-1-yl diphosphate synthase (flavodoxin) (663 aa).

[4Fe-4S] cluster is bound by residues C568, C571, C602, and E609.

Belongs to the IspG family. [4Fe-4S] cluster is required as a cofactor.

The enzyme catalyses (2E)-4-hydroxy-3-methylbut-2-enyl diphosphate + oxidized [flavodoxin] + H2O + 2 H(+) = 2-C-methyl-D-erythritol 2,4-cyclic diphosphate + reduced [flavodoxin]. It participates in isoprenoid biosynthesis; isopentenyl diphosphate biosynthesis via DXP pathway; isopentenyl diphosphate from 1-deoxy-D-xylulose 5-phosphate: step 5/6. Functionally, converts 2C-methyl-D-erythritol 2,4-cyclodiphosphate (ME-2,4cPP) into 1-hydroxy-2-methyl-2-(E)-butenyl 4-diphosphate. The sequence is that of 4-hydroxy-3-methylbut-2-en-1-yl diphosphate synthase (flavodoxin) from Leptospira borgpetersenii serovar Hardjo-bovis (strain JB197).